Reading from the N-terminus, the 316-residue chain is uncharacterized protein (316 aa).

Disordered regions lie at residues 82-105 (AMAA…SGGN) and 238-257 (ASVS…DTQE). Composition is skewed to low complexity over residues 84 to 96 (AAAS…SSGT) and 239 to 255 (SVSV…STDT).

It belongs to the MG307/MG309/MG338 family.

This is an uncharacterized protein from Mycoplasma pneumoniae (strain ATCC 29342 / M129 / Subtype 1) (Mycoplasmoides pneumoniae).